The following is a 311-amino-acid chain: Mas-related G-protein coupled receptor member E (311 aa).

The Extracellular segment spans residues 1 to 25; sequence MEPREAGQHAGAADGAQEDVAFNLV. Residues 26 to 46 form a helical membrane-spanning segment; that stretch reads ILSLTEGLGLGGLLGNGAVLW. Residues 47–63 lie on the Cytoplasmic side of the membrane; sequence LLSSNVYRNPFAIYLLD. A helical membrane pass occupies residues 64–84; that stretch reads VACADLIFLGCHMVAIIPDLL. Topologically, residues 85-95 are extracellular; the sequence is QGRLDFPGFVQ. Residues 96–116 traverse the membrane as a helical segment; that stretch reads TSLATLRFFCYIVGLSLLVAV. Residues 117–136 are Cytoplasmic-facing; sequence SVEQCLAALFPAWYSCRRPR. A helical membrane pass occupies residues 137–157; sequence HLTTCVCALTWACCLLLHLLL. Topologically, residues 158 to 177 are extracellular; it reads SGACTQFFGEPSRHLCRTLW. Residues 178-198 form a helical membrane-spanning segment; the sequence is LVAAVLLAVLCCTMCGASLML. Residues 199 to 216 lie on the Cytoplasmic side of the membrane; the sequence is LLQVERGPQRPPPRGFPT. A helical transmembrane segment spans residues 217–237; that stretch reads LILLAVLLFLFCGLPFGIYWL. Over 238–251 the chain is Extracellular; that stretch reads SRNLLWHIPHYFYH. A helical membrane pass occupies residues 252–272; the sequence is FSFLTAAVYCAAKPVVYFCLG. Residues 273-311 are Cytoplasmic-facing; sequence SAQGRRLPLRLVLQRALGDEAELGAVRETSRRGLVDIAA.

The protein belongs to the G-protein coupled receptor 1 family. Mas subfamily.

Its subcellular location is the cell membrane. Its function is as follows. Orphan receptor. May regulate nociceptor function and/or development, including the sensation or modulation of pain. The polypeptide is Mas-related G-protein coupled receptor member E (MRGPRE) (Macaca fascicularis (Crab-eating macaque)).